A 76-amino-acid polypeptide reads, in one-letter code: U7-lycotoxin-Ls1b (76 aa).

Residues 1 to 22 (MKLISFTGLALLLIVSLIDVEA) form the signal peptide. Positions 23–26 (QNEG) are excised as a propeptide.

The protein belongs to the neurotoxin 19 (CSTX) family. 07 (U7-Lctx) subfamily. Contains 4 disulfide bonds. As to expression, expressed by the venom gland.

Its subcellular location is the secreted. The protein is U7-lycotoxin-Ls1b of Lycosa singoriensis (Wolf spider).